Consider the following 261-residue polypeptide: G patch domain-containing protein 11 (261 aa).

3 disordered regions span residues 1–67, 88–124, and 184–213; these read MEEE…LNEA, ALGKKGDGIVEPIPLNIKTGRSGIGHEEMKKRKAEEN, and EAWYWPKMNEQEADEEADEETEEDEDLVEE. Composition is skewed to basic and acidic residues over residues 29–64 and 111–124; these read RVKECYEKEEKHKEANIKNRQQKLKDVEKEKRDTKL and IGHEEMKKRKAEEN. The stretch at 31-65 forms a coiled coil; the sequence is KECYEKEEKHKEANIKNRQQKLKDVEKEKRDTKLN. The 47-residue stretch at 70 to 116 folds into the G-patch domain; it reads NENKGFALLQKMGYKKGQALGKKGDGIVEPIPLNIKTGRSGIGHEEM. The stretch at 190–222 forms a coiled coil; sequence KMNEQEADEEADEETEEDEDLVEEELSTLEKLQ. Residues 194-213 show a composition bias toward acidic residues; that stretch reads QEADEEADEETEEDEDLVEE.

The protein belongs to the GPATCH11 family.

The protein resides in the chromosome. The protein localises to the centromere. Its subcellular location is the kinetochore. The polypeptide is G patch domain-containing protein 11 (gpatch11) (Xenopus tropicalis (Western clawed frog)).